Here is a 367-residue protein sequence, read N- to C-terminus: NADH-quinone oxidoreductase subunit D (367 aa).

The protein belongs to the complex I 49 kDa subunit family. As to quaternary structure, NDH-1 is composed of 14 different subunits. Subunits NuoB, C, D, E, F, and G constitute the peripheral sector of the complex.

It localises to the cell inner membrane. It catalyses the reaction a quinone + NADH + 5 H(+)(in) = a quinol + NAD(+) + 4 H(+)(out). NDH-1 shuttles electrons from NADH, via FMN and iron-sulfur (Fe-S) centers, to quinones in the respiratory chain. The immediate electron acceptor for the enzyme in this species is believed to be ubiquinone. Couples the redox reaction to proton translocation (for every two electrons transferred, four hydrogen ions are translocated across the cytoplasmic membrane), and thus conserves the redox energy in a proton gradient. In Thermosipho melanesiensis (strain DSM 12029 / CIP 104789 / BI429), this protein is NADH-quinone oxidoreductase subunit D.